The primary structure comprises 333 residues: Biotin synthase (333 aa).

The Radical SAM core domain occupies 54 to 283 (FCSNTFDMCS…RAFIRLAGGR (230 aa)). [4Fe-4S] cluster is bound by residues Cys72, Cys76, and Cys79. Residues Ser116, Cys148, Cys208, and Arg278 each coordinate [2Fe-2S] cluster.

It belongs to the radical SAM superfamily. Biotin synthase family. In terms of assembly, homodimer. [4Fe-4S] cluster is required as a cofactor. Requires [2Fe-2S] cluster as cofactor.

The catalysed reaction is (4R,5S)-dethiobiotin + (sulfur carrier)-SH + 2 reduced [2Fe-2S]-[ferredoxin] + 2 S-adenosyl-L-methionine = (sulfur carrier)-H + biotin + 2 5'-deoxyadenosine + 2 L-methionine + 2 oxidized [2Fe-2S]-[ferredoxin]. It functions in the pathway cofactor biosynthesis; biotin biosynthesis; biotin from 7,8-diaminononanoate: step 2/2. Its function is as follows. Catalyzes the conversion of dethiobiotin (DTB) to biotin by the insertion of a sulfur atom into dethiobiotin via a radical-based mechanism. The chain is Biotin synthase from Brachyspira hyodysenteriae (strain ATCC 49526 / WA1).